The sequence spans 233 residues: Biosynthetic peptidoglycan transglycosylase (233 aa).

Residues 17–37 (IVLAVLALVILPYALIFFYVL) traverse the membrane as a helical segment.

It belongs to the glycosyltransferase 51 family.

The protein localises to the cell inner membrane. The enzyme catalyses [GlcNAc-(1-&gt;4)-Mur2Ac(oyl-L-Ala-gamma-D-Glu-L-Lys-D-Ala-D-Ala)](n)-di-trans,octa-cis-undecaprenyl diphosphate + beta-D-GlcNAc-(1-&gt;4)-Mur2Ac(oyl-L-Ala-gamma-D-Glu-L-Lys-D-Ala-D-Ala)-di-trans,octa-cis-undecaprenyl diphosphate = [GlcNAc-(1-&gt;4)-Mur2Ac(oyl-L-Ala-gamma-D-Glu-L-Lys-D-Ala-D-Ala)](n+1)-di-trans,octa-cis-undecaprenyl diphosphate + di-trans,octa-cis-undecaprenyl diphosphate + H(+). It participates in cell wall biogenesis; peptidoglycan biosynthesis. Its function is as follows. Peptidoglycan polymerase that catalyzes glycan chain elongation from lipid-linked precursors. This is Biosynthetic peptidoglycan transglycosylase from Rhizobium leguminosarum bv. trifolii (strain WSM2304).